Reading from the N-terminus, the 158-residue chain is Male-specific protein scotti (158 aa).

The segment at 24-43 is disordered; it reads NVPDGNGDGDGDGDGDGNDA. Positions 30–42 are enriched in acidic residues; that stretch reads GDGDGDGDGDGND.

The protein belongs to the male-specific scotti family.

Its function is as follows. Post-meiotically transcribed gene that has a role in late spermiogenesis; required for actin cone progression during spermatid individualization. This Drosophila virilis (Fruit fly) protein is Male-specific protein scotti.